A 399-amino-acid chain; its full sequence is Tryptophan synthase beta chain (399 aa).

Residue lysine 92 is modified to N6-(pyridoxal phosphate)lysine.

The protein belongs to the TrpB family. As to quaternary structure, tetramer of two alpha and two beta chains. It depends on pyridoxal 5'-phosphate as a cofactor.

It carries out the reaction (1S,2R)-1-C-(indol-3-yl)glycerol 3-phosphate + L-serine = D-glyceraldehyde 3-phosphate + L-tryptophan + H2O. It functions in the pathway amino-acid biosynthesis; L-tryptophan biosynthesis; L-tryptophan from chorismate: step 5/5. Its function is as follows. The beta subunit is responsible for the synthesis of L-tryptophan from indole and L-serine. This chain is Tryptophan synthase beta chain, found in Nitrosomonas eutropha (strain DSM 101675 / C91 / Nm57).